The chain runs to 529 residues: Bifunctional purine biosynthesis protein PurH (529 aa).

One can recognise an MGS-like domain in the interval 2–148 (QHLRPIRRAL…KNHKDVTIVV (147 aa)).

This sequence belongs to the PurH family.

The catalysed reaction is (6R)-10-formyltetrahydrofolate + 5-amino-1-(5-phospho-beta-D-ribosyl)imidazole-4-carboxamide = 5-formamido-1-(5-phospho-D-ribosyl)imidazole-4-carboxamide + (6S)-5,6,7,8-tetrahydrofolate. It carries out the reaction IMP + H2O = 5-formamido-1-(5-phospho-D-ribosyl)imidazole-4-carboxamide. It functions in the pathway purine metabolism; IMP biosynthesis via de novo pathway; 5-formamido-1-(5-phospho-D-ribosyl)imidazole-4-carboxamide from 5-amino-1-(5-phospho-D-ribosyl)imidazole-4-carboxamide (10-formyl THF route): step 1/1. It participates in purine metabolism; IMP biosynthesis via de novo pathway; IMP from 5-formamido-1-(5-phospho-D-ribosyl)imidazole-4-carboxamide: step 1/1. This is Bifunctional purine biosynthesis protein PurH from Proteus mirabilis (strain HI4320).